We begin with the raw amino-acid sequence, 255 residues long: Aspartate/glutamate leucyltransferase (255 aa).

The protein belongs to the R-transferase family. Bpt subfamily.

It is found in the cytoplasm. The enzyme catalyses N-terminal L-glutamyl-[protein] + L-leucyl-tRNA(Leu) = N-terminal L-leucyl-L-glutamyl-[protein] + tRNA(Leu) + H(+). It carries out the reaction N-terminal L-aspartyl-[protein] + L-leucyl-tRNA(Leu) = N-terminal L-leucyl-L-aspartyl-[protein] + tRNA(Leu) + H(+). Its function is as follows. Functions in the N-end rule pathway of protein degradation where it conjugates Leu from its aminoacyl-tRNA to the N-termini of proteins containing an N-terminal aspartate or glutamate. The protein is Aspartate/glutamate leucyltransferase of Leptospira borgpetersenii serovar Hardjo-bovis (strain JB197).